The following is a 431-amino-acid chain: Histidinol dehydrogenase (431 aa).

Tyrosine 124, glutamine 187, and asparagine 210 together coordinate NAD(+). Substrate contacts are provided by serine 236, glutamine 258, and histidine 261. Glutamine 258 and histidine 261 together coordinate Zn(2+). Catalysis depends on proton acceptor residues glutamate 325 and histidine 326. Residues histidine 326, aspartate 359, glutamate 413, and histidine 418 each coordinate substrate. Position 359 (aspartate 359) interacts with Zn(2+). Histidine 418 provides a ligand contact to Zn(2+).

Belongs to the histidinol dehydrogenase family. Zn(2+) serves as cofactor.

The enzyme catalyses L-histidinol + 2 NAD(+) + H2O = L-histidine + 2 NADH + 3 H(+). The protein operates within amino-acid biosynthesis; L-histidine biosynthesis; L-histidine from 5-phospho-alpha-D-ribose 1-diphosphate: step 9/9. Catalyzes the sequential NAD-dependent oxidations of L-histidinol to L-histidinaldehyde and then to L-histidine. The sequence is that of Histidinol dehydrogenase from Legionella pneumophila subsp. pneumophila (strain Philadelphia 1 / ATCC 33152 / DSM 7513).